The primary structure comprises 65 residues: Probable movement protein p8 (65 aa).

The segment covering 1–10 (MENTENVRSG) has biased composition (polar residues). Positions 1-47 (MENTENVRSGRNQREYSKERQQEGGYKEVSKAAVRKEGDVKQDMGPS) are disordered. The segment covering 12–42 (NQREYSKERQQEGGYKEVSKAAVRKEGDVKQ) has biased composition (basic and acidic residues).

Belongs to the carmovirus/necrovirus/panicovirus movement protein p8 family.

In terms of biological role, cell-to-cell movement. The sequence is that of Probable movement protein p8 from Tobacco necrosis virus (strain D) (TNV-D).